A 635-amino-acid polypeptide reads, in one-letter code: Probable extracellular metalloproteinase 1 (635 aa).

Positions 1–19 (MHGLLLAAGLLSLPLHVLA) are cleaved as a signal peptide. Positions 20–246 (HPQPSTSTSL…VHNVVDYVAH (227 aa)) are excised as a propeptide. A glycan (N-linked (GlcNAc...) asparagine) is linked at Asn-287. His-430 lines the Zn(2+) pocket. The active site involves Glu-431. Zn(2+) is bound at residue His-434. Residues Asn-475, Asn-594, and Asn-623 are each glycosylated (N-linked (GlcNAc...) asparagine).

It belongs to the peptidase M36 family. Zn(2+) is required as a cofactor.

It is found in the secreted. Secreted metalloproteinase probably acting as a virulence factor. This Arthroderma benhamiae (strain ATCC MYA-4681 / CBS 112371) (Trichophyton mentagrophytes) protein is Probable extracellular metalloproteinase 1 (MEP1).